The chain runs to 99 residues: Complement inhibitor RaCI7 (99 aa).

The N-terminal stretch at 1–24 (MAALNGLVLLLLTISAMFISECYS) is a signal peptide. Disulfide bonds link cysteine 37–cysteine 61, cysteine 42–cysteine 63, and cysteine 57–cysteine 78.

The protein belongs to the RaCI family. Expressed in salivary glands.

It localises to the secreted. Functionally, complement inhibitor. Prevents complement-mediated C5 activation by binding to C5. Binds C5 at a different binding site than the other tick complement inhibitors OmCI and CirpT1, and the drug eculizumab. The sequence is that of Complement inhibitor RaCI7 from Dermacentor andersoni (Rocky mountain wood tick).